The primary structure comprises 1391 residues: DNA-directed RNA polymerase subunit beta' (1391 aa).

Residues cysteine 72, cysteine 74, cysteine 87, and cysteine 90 each coordinate Zn(2+). Aspartate 462, aspartate 464, and aspartate 466 together coordinate Mg(2+). The Zn(2+) site is built by cysteine 816, cysteine 890, cysteine 897, and cysteine 900.

The protein belongs to the RNA polymerase beta' chain family. In terms of assembly, the RNAP catalytic core consists of 2 alpha, 1 beta, 1 beta' and 1 omega subunit. When a sigma factor is associated with the core the holoenzyme is formed, which can initiate transcription. Requires Mg(2+) as cofactor. Zn(2+) is required as a cofactor.

It carries out the reaction RNA(n) + a ribonucleoside 5'-triphosphate = RNA(n+1) + diphosphate. In terms of biological role, DNA-dependent RNA polymerase catalyzes the transcription of DNA into RNA using the four ribonucleoside triphosphates as substrates. The sequence is that of DNA-directed RNA polymerase subunit beta' from Neisseria meningitidis serogroup A / serotype 4A (strain DSM 15465 / Z2491).